Here is a 219-residue protein sequence, read N- to C-terminus: Protein Cmaq_0360 (219 aa).

Positions 8 to 204 (EQGKFLVRLA…EKGPRGDVYE (197 aa)) constitute an AMMECR1 domain.

This is Protein Cmaq_0360 from Caldivirga maquilingensis (strain ATCC 700844 / DSM 13496 / JCM 10307 / IC-167).